We begin with the raw amino-acid sequence, 130 residues long: Mitochondrial pyruvate carrier 1 (130 aa).

The next 2 helical transmembrane spans lie at 23–45 (LKYI…IAAI) and 55–77 (ISGP…ALSV).

It belongs to the mitochondrial pyruvate carrier (MPC) (TC 2.A.105) family. In terms of assembly, the functional 150 kDa pyruvate import complex is a heteromer of MPC1 and either MPC2 or MPC3.

It localises to the mitochondrion. The protein resides in the mitochondrion inner membrane. In terms of biological role, mediates the uptake of pyruvate into mitochondria. The chain is Mitochondrial pyruvate carrier 1 from Saccharomyces cerevisiae (strain ATCC 204508 / S288c) (Baker's yeast).